A 257-amino-acid polypeptide reads, in one-letter code: 3-deoxy-manno-octulosonate cytidylyltransferase (257 aa).

This sequence belongs to the KdsB family.

The protein resides in the cytoplasm. It carries out the reaction 3-deoxy-alpha-D-manno-oct-2-ulosonate + CTP = CMP-3-deoxy-beta-D-manno-octulosonate + diphosphate. It functions in the pathway nucleotide-sugar biosynthesis; CMP-3-deoxy-D-manno-octulosonate biosynthesis; CMP-3-deoxy-D-manno-octulosonate from 3-deoxy-D-manno-octulosonate and CTP: step 1/1. The protein operates within bacterial outer membrane biogenesis; lipopolysaccharide biosynthesis. In terms of biological role, activates KDO (a required 8-carbon sugar) for incorporation into bacterial lipopolysaccharide in Gram-negative bacteria. The chain is 3-deoxy-manno-octulosonate cytidylyltransferase from Xylella fastidiosa (strain 9a5c).